Consider the following 88-residue polypeptide: Apolipoprotein C-I (88 aa).

The first 26 residues, 1 to 26 (MRLFISLPVLIVVLAMALEGPAPAQA), serve as a signal peptide directing secretion.

Belongs to the apolipoprotein C1 family.

It localises to the secreted. Functionally, inhibitor of lipoprotein binding to the low density lipoprotein (LDL) receptor, LDL receptor-related protein, and very low density lipoprotein (VLDL) receptor. Associates with high density lipoproteins (HDL) and the triacylglycerol-rich lipoproteins in the plasma and makes up about 10% of the protein of the VLDL and 2% of that of HDL. Appears to interfere directly with fatty acid uptake and is also the major plasma inhibitor of cholesteryl ester transfer protein (CETP). Modulates the interaction of APOE with beta-migrating VLDL and inhibits binding of beta-VLDL to the LDL receptor-related protein. Binds free fatty acids and reduces their intracellular esterification. This chain is Apolipoprotein C-I (APOC1), found in Myodes glareolus (Bank vole).